The following is a 189-amino-acid chain: Inner membrane-spanning protein YciB (189 aa).

5 consecutive transmembrane segments (helical) span residues 4 to 24 (FFEFIPLIIFFVVFKTTDIYI), 53 to 73 (ITFGMVLVFGTLTIVLHDDVF), 76 to 96 (WKVTVVYALFSLALLVSQFFY), 121 to 141 (MAWALLFAVLSAVNVYVAFSL), and 149 to 169 (FKVFGLLAITLAFTLLSGLYI).

This sequence belongs to the YciB family.

It localises to the cell inner membrane. In terms of biological role, plays a role in cell envelope biogenesis, maintenance of cell envelope integrity and membrane homeostasis. This is Inner membrane-spanning protein YciB from Psychromonas ingrahamii (strain DSM 17664 / CCUG 51855 / 37).